We begin with the raw amino-acid sequence, 398 residues long: S-adenosylmethionine synthase (398 aa).

H17 contributes to the ATP binding site. Residue D19 coordinates Mg(2+). A K(+)-binding site is contributed by E45. L-methionine is bound by residues E58 and Q101. Positions Q101 to T111 are flexible loop. ATP is bound by residues D176 to K178, R243 to F244, D252, R258 to K259, and K279. D252 contributes to the L-methionine binding site. Position 283 (K283) interacts with L-methionine.

This sequence belongs to the AdoMet synthase family. As to quaternary structure, homotetramer; dimer of dimers. The cofactor is Mg(2+). K(+) serves as cofactor.

It is found in the cytoplasm. It carries out the reaction L-methionine + ATP + H2O = S-adenosyl-L-methionine + phosphate + diphosphate. The protein operates within amino-acid biosynthesis; S-adenosyl-L-methionine biosynthesis; S-adenosyl-L-methionine from L-methionine: step 1/1. Its function is as follows. Catalyzes the formation of S-adenosylmethionine (AdoMet) from methionine and ATP. The overall synthetic reaction is composed of two sequential steps, AdoMet formation and the subsequent tripolyphosphate hydrolysis which occurs prior to release of AdoMet from the enzyme. This is S-adenosylmethionine synthase from Staphylococcus saprophyticus subsp. saprophyticus (strain ATCC 15305 / DSM 20229 / NCIMB 8711 / NCTC 7292 / S-41).